A 233-amino-acid polypeptide reads, in one-letter code: Ribonuclease 3 (233 aa).

The 123-residue stretch at 4–126 folds into the RNase III domain; the sequence is LNKLMERLGH…IVGAIYIDAG (123 aa). Glu39 contributes to the Mg(2+) binding site. Asp43 is a catalytic residue. Mg(2+)-binding residues include Asp112 and Glu115. Residue Glu115 is part of the active site. Residues 153 to 222 enclose the DRBM domain; sequence DAKSLLQEWL…AKRFLELLDD (70 aa).

The protein belongs to the ribonuclease III family. Homodimer. Mg(2+) serves as cofactor.

It localises to the cytoplasm. It catalyses the reaction Endonucleolytic cleavage to 5'-phosphomonoester.. Its function is as follows. Digests double-stranded RNA. Involved in the processing of primary rRNA transcript to yield the immediate precursors to the large and small rRNAs (23S and 16S). Processes some mRNAs, and tRNAs when they are encoded in the rRNA operon. Processes pre-crRNA and tracrRNA of type II CRISPR loci if present in the organism. The sequence is that of Ribonuclease 3 from Coxiella burnetii (strain RSA 331 / Henzerling II).